The primary structure comprises 793 residues: Serine/threonine-protein phosphatase 1 regulatory subunit GAC1 (793 aa).

Residues 1 to 10 (MVIQTATTLS) are compositionally biased toward polar residues. The interval 1–20 (MVIQTATTLSPAKARPSFPH) is disordered. The CBM21 domain maps to 235-360 (TKYLNGQNVK…NNNGKNYHLF (126 aa)). S415 and S424 each carry phosphoserine. 2 disordered regions span residues 450 to 491 (LENA…SIDL) and 616 to 671 (TTMD…LNDH). The segment covering 623 to 633 (KTSTINNSTDT) has biased composition (polar residues). Positions 637–648 (PSKENGTVKENK) are enriched in basic and acidic residues. Residues 649–665 (SSANSTSAPSSSQNRAS) show a composition bias toward low complexity.

In terms of biological role, regulates the activity of glycogen synthase. It is most probably a regulatory subunit for protein phosphatase type 1. The sequence is that of Serine/threonine-protein phosphatase 1 regulatory subunit GAC1 (GAC1) from Saccharomyces cerevisiae (strain ATCC 204508 / S288c) (Baker's yeast).